The primary structure comprises 225 residues: MSNETNCTLDFEQSVELFKEYNLFITAFLLFLTIILQYGYATRIRFIYILKMIVLWCFWPLNIAVGVISCIYPPNTGGLVAAIILTVFACLSFVGYWIQSCRLFKRCRSWWSFNPESNAVGSILLTNGQQCNFAIESVPMVLAPIIKNGVLYCEGQWLAKCEPDHLPKDIFVCTADRRNIYRMVQKYTGDQSGNKKRFATFVYAKQSVDTGELESVATGGSSLYT.

At 1–20 (MSNETNCTLDFEQSVELFKE) the chain is on the virion surface side. A helical membrane pass occupies residues 21–41 (YNLFITAFLLFLTIILQYGYA). Topologically, residues 42–51 (TRIRFIYILK) are intravirion. The helical transmembrane segment at 52-72 (MIVLWCFWPLNIAVGVISCIY) threads the bilayer. Residues 73-77 (PPNTG) lie on the Virion surface side of the membrane. The chain crosses the membrane as a helical span at residues 78-98 (GLVAAIILTVFACLSFVGYWI). At 99–225 (QSCRLFKRCR…VATGGSSLYT (127 aa)) the chain is on the intravirion side.

It belongs to the gammacoronaviruses M protein family. In terms of assembly, homomultimer. Interacts with envelope E protein in the budding compartment of the host cell, which is located between endoplasmic reticulum and the Golgi complex. Forms a complex with HE and S proteins. Interacts with nucleocapsid N protein. This interaction probably participates in RNA packaging into the virus.

The protein resides in the virion membrane. It localises to the host Golgi apparatus membrane. Functionally, component of the viral envelope that plays a central role in virus morphogenesis and assembly via its interactions with other viral proteins. This chain is Membrane protein, found in Avian infectious bronchitis virus (strain KB8523) (IBV).